We begin with the raw amino-acid sequence, 602 residues long: Non structural protein VP9' (602 aa).

The protein localises to the host cytoplasm. This chain is Non structural protein VP9', found in Callospermophilus lateralis (Golden-mantled ground squirrel).